A 318-amino-acid chain; its full sequence is Porphobilinogen deaminase (318 aa).

The residue at position 241 (cysteine 241) is an S-(dipyrrolylmethanemethyl)cysteine.

It belongs to the HMBS family. In terms of assembly, monomer. Dipyrromethane serves as cofactor.

The enzyme catalyses 4 porphobilinogen + H2O = hydroxymethylbilane + 4 NH4(+). It participates in porphyrin-containing compound metabolism; protoporphyrin-IX biosynthesis; coproporphyrinogen-III from 5-aminolevulinate: step 2/4. Tetrapolymerization of the monopyrrole PBG into the hydroxymethylbilane pre-uroporphyrinogen in several discrete steps. The chain is Porphobilinogen deaminase from Citrifermentans bemidjiense (strain ATCC BAA-1014 / DSM 16622 / JCM 12645 / Bem) (Geobacter bemidjiensis).